A 271-amino-acid polypeptide reads, in one-letter code: Formamidopyrimidine-DNA glycosylase (271 aa).

The Schiff-base intermediate with DNA role is filled by Pro2. The active-site Proton donor is Glu3. Lys58 functions as the Proton donor; for beta-elimination activity in the catalytic mechanism. DNA-binding residues include His91 and Arg109. The FPG-type zinc-finger motif lies at 236 to 270; it reads FVYGREGLACRVCATPVRRVVIGQRSTFFCPRCQR. Arg260 functions as the Proton donor; for delta-elimination activity in the catalytic mechanism.

The protein belongs to the FPG family. Monomer. Zn(2+) is required as a cofactor.

It carries out the reaction Hydrolysis of DNA containing ring-opened 7-methylguanine residues, releasing 2,6-diamino-4-hydroxy-5-(N-methyl)formamidopyrimidine.. It catalyses the reaction 2'-deoxyribonucleotide-(2'-deoxyribose 5'-phosphate)-2'-deoxyribonucleotide-DNA = a 3'-end 2'-deoxyribonucleotide-(2,3-dehydro-2,3-deoxyribose 5'-phosphate)-DNA + a 5'-end 5'-phospho-2'-deoxyribonucleoside-DNA + H(+). In terms of biological role, involved in base excision repair of DNA damaged by oxidation or by mutagenic agents. Acts as a DNA glycosylase that recognizes and removes damaged bases. Has a preference for oxidized purines, such as 7,8-dihydro-8-oxoguanine (8-oxoG). Has AP (apurinic/apyrimidinic) lyase activity and introduces nicks in the DNA strand. Cleaves the DNA backbone by beta-delta elimination to generate a single-strand break at the site of the removed base with both 3'- and 5'-phosphates. The protein is Formamidopyrimidine-DNA glycosylase of Aromatoleum aromaticum (strain DSM 19018 / LMG 30748 / EbN1) (Azoarcus sp. (strain EbN1)).